The chain runs to 446 residues: Xylose isomerase 1 (446 aa).

Residues histidine 109 and aspartate 112 contribute to the active site. Mg(2+) contacts are provided by glutamate 240, glutamate 276, histidine 279, aspartate 304, aspartate 315, aspartate 317, and aspartate 347.

Belongs to the xylose isomerase family. As to quaternary structure, homotetramer. Mg(2+) is required as a cofactor.

It localises to the cytoplasm. It catalyses the reaction alpha-D-xylose = alpha-D-xylulofuranose. This is Xylose isomerase 1 from Xanthomonas campestris pv. campestris (strain 8004).